A 150-amino-acid chain; its full sequence is Large ribosomal subunit protein bL9 (150 aa).

Belongs to the bacterial ribosomal protein bL9 family.

Its function is as follows. Binds to the 23S rRNA. The sequence is that of Large ribosomal subunit protein bL9 from Lactococcus lactis subsp. cremoris (strain MG1363).